The sequence spans 326 residues: Cathepsin L-like proteinase (326 aa).

An N-terminal signal peptide occupies residues 1-15 (MRLFILAVLTVGVLG). The propeptide at 16–106 (SNDDLWHQWK…HGVPYEANNR (91 aa)) is activation peptide. Pro-109 carries the 3-hydroxyproline; partial modification. Cystine bridges form between Cys-129-Cys-172, Cys-163-Cys-204, and Cys-262-Cys-311. The active site involves Cys-132. A 3-hydroxyproline; partial modification is found at Pro-196. Catalysis depends on residues His-269 and Asn-289.

Belongs to the peptidase C1 family. As to quaternary structure, monomer. Post-translationally, contains cysteine residues involved in intramolecular disulfide bonding.

The protein resides in the secreted. Its activity is regulated as follows. Strongly inhibited by Antipain, E64 and Leupeptin, and weakly inhibited by iodoacetic acid (IAA) and phenylmethylsulfonyl fluoride (PMSF). Requires the presence of dithiothreitol (DTT) for activity. In terms of biological role, thiol protease. Probably involved in interaction with host tissues. Displays a similar activity to that of papain. Has high activity on Z-Phe-Arg-NHMec, but no activity on Z-Arg-NHMec. The sequence is that of Cathepsin L-like proteinase from Fasciola hepatica (Liver fluke).